Here is a 659-residue protein sequence, read N- to C-terminus: Alpha-galactosidase D (659 aa).

Residues 1–20 (MRALVPMVVAATALASPAPA) form the signal peptide. Residues Asn-48, Asn-86, and Asn-130 are each glycosylated (N-linked (GlcNAc...) asparagine). The cysteines at positions 125 and 158 are disulfide-linked. The active-site Nucleophile is the Asp-156. N-linked (GlcNAc...) asparagine glycosylation is present at Asn-183. 201 to 205 (EWGID) is a substrate binding site. Residue Asp-223 is the Proton donor of the active site. Residues Asn-438, Asn-450, Asn-484, Asn-551, and Asn-583 are each glycosylated (N-linked (GlcNAc...) asparagine).

This sequence belongs to the glycosyl hydrolase 27 family.

It is found in the secreted. It catalyses the reaction Hydrolysis of terminal, non-reducing alpha-D-galactose residues in alpha-D-galactosides, including galactose oligosaccharides, galactomannans and galactolipids.. In terms of biological role, hydrolyzes a variety of simple alpha-D-galactoside as well as more complex molecules such as oligosaccharides and polysaccharides. Active on paranitrophenyl-alpha-galactoside but not on raffinose, locust bean gum and gum guar. The chain is Alpha-galactosidase D (aglD) from Emericella nidulans (strain FGSC A4 / ATCC 38163 / CBS 112.46 / NRRL 194 / M139) (Aspergillus nidulans).